Here is a 739-residue protein sequence, read N- to C-terminus: Phosphoribosylformylglycinamidine synthase subunit PurL (739 aa).

His54 is an active-site residue. ATP is bound by residues Tyr57 and Lys96. Glu98 serves as a coordination point for Mg(2+). Residues 99 to 102 (SHNH) and Arg121 contribute to the substrate site. Residue His100 is the Proton acceptor of the active site. Asp122 contacts Mg(2+). Gln245 is a binding site for substrate. Asp275 lines the Mg(2+) pocket. 319–321 (ESQ) provides a ligand contact to substrate. ATP contacts are provided by Asp504 and Gly541. Mg(2+) is bound at residue Asn542. Substrate is bound at residue Ser544.

This sequence belongs to the FGAMS family. Monomer. Part of the FGAM synthase complex composed of 1 PurL, 1 PurQ and 2 PurS subunits.

It is found in the cytoplasm. The catalysed reaction is N(2)-formyl-N(1)-(5-phospho-beta-D-ribosyl)glycinamide + L-glutamine + ATP + H2O = 2-formamido-N(1)-(5-O-phospho-beta-D-ribosyl)acetamidine + L-glutamate + ADP + phosphate + H(+). Its pathway is purine metabolism; IMP biosynthesis via de novo pathway; 5-amino-1-(5-phospho-D-ribosyl)imidazole from N(2)-formyl-N(1)-(5-phospho-D-ribosyl)glycinamide: step 1/2. Part of the phosphoribosylformylglycinamidine synthase complex involved in the purines biosynthetic pathway. Catalyzes the ATP-dependent conversion of formylglycinamide ribonucleotide (FGAR) and glutamine to yield formylglycinamidine ribonucleotide (FGAM) and glutamate. The FGAM synthase complex is composed of three subunits. PurQ produces an ammonia molecule by converting glutamine to glutamate. PurL transfers the ammonia molecule to FGAR to form FGAM in an ATP-dependent manner. PurS interacts with PurQ and PurL and is thought to assist in the transfer of the ammonia molecule from PurQ to PurL. This is Phosphoribosylformylglycinamidine synthase subunit PurL from Lactococcus lactis subsp. cremoris (Streptococcus cremoris).